A 187-amino-acid chain; its full sequence is uncharacterized protein (187 aa).

4 consecutive transmembrane segments (helical) span residues 29-50, 70-92, 128-147, and 154-176; these read IFID…VYWI, FVIG…INAY, IFFA…SVLR, and LALV…ISYL.

The protein resides in the cell membrane. This is an uncharacterized protein from Archaeoglobus fulgidus (strain ATCC 49558 / DSM 4304 / JCM 9628 / NBRC 100126 / VC-16).